The sequence spans 311 residues: MAGELSIGAELPTSPLAMEYVNDFDLMKFDVKKEPLGRNDRSGRHCTRLQPAGSVSSTPISTPCSSVPSSPSFSPTEQKTHLEDLYWMANSYQQMNPEALNLTPEDAVEALIGSHQVSQQLQGFESFRAHHHHHHHHHQHHHQYPAVTHEDLAGSGHPHHHHHHHHQASPTPSTSSSSSQQLQTSHQQHPPSSSVEDRFSDDQLVSMSVRELNRHLRGFTKDEVIRLKQKRRTLKNRGYAQSCRYKRVQQKHHLENEKTQLIQQVEQLKQEVTRLARERDAYKLKCEKLASNGFREAGSTSDNPSSPEFFM.

2 disordered regions span residues 35 to 78 (PLGR…PTEQ) and 150 to 199 (EDLA…EDRF). The segment covering 54–76 (SVSSTPISTPCSSVPSSPSFSPT) has biased composition (low complexity). A compositionally biased stretch (basic residues) spans 157–167 (HPHHHHHHHHQ). Positions 168–194 (ASPTPSTSSSSSQQLQTSHQQHPPSSS) are enriched in low complexity. A basic motif region spans residues 226–251 (RLKQKRRTLKNRGYAQSCRYKRVQQK). The bZIP domain maps to 226-289 (RLKQKRRTLK…DAYKLKCEKL (64 aa)). Residues 254-275 (LENEKTQLIQQVEQLKQEVTRL) form a leucine-zipper region.

It belongs to the bZIP family. Maf subfamily. In terms of assembly, homodimer or heterodimer with other bHLH-Zip transcription factors. Binds DNA as a homodimer or heterodimer. Self-associates; the interaction requires the intact MAFB leucine-zipper domain. Interacts with FOS, HOXD12 and PRRX1. In terms of tissue distribution, expressed in brain, thymus, gut, lung, mesenterium, spleen, kidney, ovary and bursa.

The protein resides in the nucleus. Acts as a transcriptional activator or repressor. Positively regulates the expression of alpha-A crystallin genes during lens fiber cell differentiation. Binds to Maf recognition elements (MARE). The polypeptide is Transcription factor MafB (MAFB) (Gallus gallus (Chicken)).